A 130-amino-acid chain; its full sequence is Protein ApaG (130 aa).

The ApaG domain maps to 3–127 (KAETRGISVI…FSLDVPHMRR (125 aa)).

This chain is Protein ApaG, found in Methylobacterium nodulans (strain LMG 21967 / CNCM I-2342 / ORS 2060).